The sequence spans 1029 residues: QMSYVDHSKSSGPPQPGPMGPMGPRGPPGPPGSSGPQGFTGPPGEPGEPGASGAMGSRGPSGPPGKNGDDGEPGKPGRPGERGAAGPQGARGFSGLDGAKGDAGPAGPKGESGAPGENGVPGVMGARGRPGPPGPSGARGNDGNTGPXGPPGXTGPAGPPGFPGGAGAKGETGPAGGRGNEGPQGARGEPGNPGPAGPAGPAGSPGTDGAPGAKGSPGAAGLAGAPGFGPAGAQGAVGAPGPKGNNGDPGASGPKGEPGAKGEPGPAGVQGLPGPSGEEGKRGARGEPGGAGPRGPPGERGAPGARGFPGADGGAGGKGAPGERGAPGALGAQGATGESGSPGAPGAPGSKGVTGSPGSPGPDGKTGPAGVAGQDGRPGPPGSAGARGQPGVMGFPGPKGPAGESGKPGERGPSGATGAVGAPGKDGDVGAPGPSGVAGPAGEKGEQGPAGPPGFQGLPGPQGATGETGKGLGGPTGPRGAPGPAGNDGAKGEPGAAGAPGGLGAPGMQGMPGERGAAGLPGAKGERGDAGGKGGDGAPGKDGARGMTGSLGVPGPPGAQGEKGEGGAVGVAGPTGPRGAPGERGETGPPGPAGFAGPPGADGQPGAKGETGDSGPKGDAGAPGPGGPVGASGPQGPAGPTGPKGARGGAGPPGATGFPGPAGRVGPPGPAGAAGPPGPVGPVGKDGARGARGETGAAGRPGEAGAAGAPGPSGEKGSPGXDGAPGGLPGPQGLAGQRGLPGQRGERGFSGLPGPSGEPGKQGPSGPVGERGPPGPAGPPGLSGAPGEAGREGSQGHDGAPGRDGSAGPKGDRGESGMAGPPGAPGAPGAPGAVGPSGKSGDRGETGPAGPAGPSGPAGVRGPAGPAGAKGDRGEAGEAGDRGGHRGFTGMQGLPGPAGAHGERGPAGASGPAGPRGPAGSNGAPGKDGMNGLPGPLGPPGPRGRNGEMGPAGPPGPPGPAGPPGPPGSGFDFVSQPLQEKAPDPFRGGHYRLRSPDGTQKLPLLDLAPMDVGAPDQEFGVEVGPVCFL.

Positions 1-990 (QMSYVDHSKS…KAPDPFRGGH (990 aa)) are disordered. The segment covering 13–33 (PPQPGPMGPMGPRGPPGPPGS) has biased composition (pro residues). The span at 34-57 (SGPQGFTGPPGEPGEPGASGAMGS) shows a compositional bias: low complexity. Residues 67-81 (NGDDGEPGKPGRPGE) are compositionally biased toward basic and acidic residues. 3 stretches are compositionally biased toward low complexity: residues 82-91 (RGAAGPQGAR), 120-129 (VPGVMGARGR), and 136-147 (SGARGNDGNTGP). Residues 163–182 (PGGAGAKGETGPAGGRGNEG) are compositionally biased toward gly residues. Low complexity-rich tracts occupy residues 199–223 (AGPAGSPGTDGAPGAKGSPGAAGLA), 233–267 (AQGAVGAPGPKGNNGDPGASGPKGEPGAKGEPGPA), and 299–309 (ERGAPGARGFP). A compositionally biased stretch (gly residues) spans 310–322 (GADGGAGGKGAPG). Low complexity-rich tracts occupy residues 323 to 351 (ERGAPGALGAQGATGESGSPGAPGAPGSK) and 429 to 465 (VGAPGPSGVAGPAGEKGEQGPAGPPGFQGLPGPQGAT). Residues 466–477 (GETGKGLGGPTG) are compositionally biased toward gly residues. The span at 478 to 497 (PRGAPGPAGNDGAKGEPGAA) shows a compositional bias: low complexity. Gly residues-rich tracts occupy residues 498–507 (GAPGGLGAPG) and 531–540 (GGKGGDGAPG). Composition is skewed to low complexity over residues 571-580 (VAGPTGPRGA) and 593-620 (AGFAGPPGADGQPGAKGETGDSGPKGDA). Gly residues-rich tracts occupy residues 621-630 (GAPGPGGPVG) and 645-654 (GARGGAGPPG). Composition is skewed to low complexity over residues 655–665 (ATGFPGPAGRV), 694–722 (ETGAAGRPGEAGAAGAPGPSGEKGSPGXD), 731–743 (PQGLAGQRGLPGQ), 830–839 (APGAVGPSGK), and 855–869 (SGPAGVRGPAGPAGA). Basic and acidic residues predominate over residues 870–884 (KGDRGEAGEAGDRGG). A compositionally biased stretch (low complexity) spans 906-934 (PAGASGPAGPRGPAGSNGAPGKDGMNGLP). Residues 952–967 (AGPPGPPGPAGPPGPP) are compositionally biased toward pro residues. The 31-residue stretch at 999-1029 (TQKLPLLDLAPMDVGAPDQEFGVEVGPVCFL) folds into the Fibrillar collagen NC1 domain.

This sequence belongs to the fibrillar collagen family.

The protein resides in the secreted. The protein localises to the extracellular space. Its subcellular location is the extracellular matrix. The chain is Collagen, type I, alpha 1b from Epinephelus aeneus (White grouper).